Here is a 399-residue protein sequence, read N- to C-terminus: Arginase (399 aa).

Residues histidine 193, aspartate 216, histidine 218, and aspartate 220 each coordinate Mn(2+). Residues 218–222, 229–231, and aspartate 273 each bind substrate; these read HADIN and SGN. Aspartate 322 and aspartate 324 together coordinate Mn(2+). The substrate site is built by threonine 336 and glutamate 367.

Belongs to the arginase family. It depends on Mn(2+) as a cofactor.

The protein localises to the cytoplasm. The enzyme catalyses L-arginine + H2O = urea + L-ornithine. Its pathway is nitrogen metabolism; urea cycle; L-ornithine and urea from L-arginine: step 1/1. The chain is Arginase (CAR1) from Eremothecium gossypii (strain ATCC 10895 / CBS 109.51 / FGSC 9923 / NRRL Y-1056) (Yeast).